The primary structure comprises 59 residues: SPbeta prophage-derived uncharacterized protein YosB (59 aa).

This Bacillus subtilis (strain 168) protein is SPbeta prophage-derived uncharacterized protein YosB (yosB).